The following is a 293-amino-acid chain: MLKGSIVALITPMNRDGSVDNASLERLVEFHINQGTDAIVAVGTTGESSTLAQSEHIAVVEQVVSFAAGRIAVIAGNGANATAHGVELTQKLAKTGVDAMLGVTPYYNKPSPKGIIAHYTAIANSTDIAQILYNVPGRTCLDMQPEVIAELAKVSNIIGVKEATGDVSRVAKLRALCGDDFLLYSGDDASAKDFLLLGGDGVISVANNIVPKAFKVMCDAALSGNAELAKIHDDTLRGLYGSLFCEANPIPVKWASHQLGLITNAYIRLPLTELSEQFHGLLLETMKQAQLKV.

Thr45 is a binding site for pyruvate. Tyr133 (proton donor/acceptor) is an active-site residue. Lys161 (schiff-base intermediate with substrate) is an active-site residue. Residue Ile203 coordinates pyruvate.

This sequence belongs to the DapA family. As to quaternary structure, homotetramer; dimer of dimers.

The protein localises to the cytoplasm. The enzyme catalyses L-aspartate 4-semialdehyde + pyruvate = (2S,4S)-4-hydroxy-2,3,4,5-tetrahydrodipicolinate + H2O + H(+). It participates in amino-acid biosynthesis; L-lysine biosynthesis via DAP pathway; (S)-tetrahydrodipicolinate from L-aspartate: step 3/4. Catalyzes the condensation of (S)-aspartate-beta-semialdehyde [(S)-ASA] and pyruvate to 4-hydroxy-tetrahydrodipicolinate (HTPA). The polypeptide is 4-hydroxy-tetrahydrodipicolinate synthase (Shewanella denitrificans (strain OS217 / ATCC BAA-1090 / DSM 15013)).